The following is a 356-amino-acid chain: Protein RecA (356 aa).

Residue 68-75 participates in ATP binding; it reads GQESSGKT.

Belongs to the RecA family.

Its subcellular location is the cytoplasm. Its function is as follows. Can catalyze the hydrolysis of ATP in the presence of single-stranded DNA, the ATP-dependent uptake of single-stranded DNA by duplex DNA, and the ATP-dependent hybridization of homologous single-stranded DNAs. It interacts with LexA causing its activation and leading to its autocatalytic cleavage. This Thermotoga petrophila (strain ATCC BAA-488 / DSM 13995 / JCM 10881 / RKU-1) protein is Protein RecA.